Reading from the N-terminus, the 177-residue chain is FMRFamide-related peptides (177 aa).

A signal peptide spans 1-21; the sequence is MNHPRSIAMLAALWLVVSVTS. The propeptide occupies 22–32; sequence TPVRRSPDLEA. Phe-45 carries the post-translational modification Phenylalanine amide. Positions 47–93 are excised as a propeptide; that stretch reads RSTLPVVPPAQPSFLQRYSAPQPAALTADDLMTFLRAYEEDYSSPVS. 2 positions are modified to phenylalanine amide: Phe-102 and Phe-111. Residues 113–131 constitute a propeptide that is removed on maturation; that stretch reads RSVDEENSGYQAETNTYPQ. Leu-143 carries the leucine amide modification. The propeptide occupies 145 to 177; it reads RDNELSESNDEDRYEVESERTKRSVVDPCNDCA. Positions 145 to 177 are disordered; the sequence is RDNELSESNDEDRYEVESERTKRSVVDPCNDCA. Residues 149-158 are compositionally biased toward acidic residues; that stretch reads LSESNDEDRY. A compositionally biased stretch (basic and acidic residues) spans 159–169; the sequence is EVESERTKRSV.

The protein belongs to the FARP (FMRFamide related peptide) family. In terms of tissue distribution, only expressed in the CNS and predominantly in the thoracic ganglia. Strongest expression is seen in two pairs of large neurons in each thoracic ganglion. These neurons are ventrolateral neurosecretory cells 1 and 2, they project their axons through transverse nerves into the periphery where axons from the prothoracic ganglion innervate the prothoracic gland.

Its subcellular location is the secreted. Functionally, regulates ecdysteroidogenesis by direct innervation of the prothoracic gland by reducing cAMP production via the receptor for myosuppressin. The neurons that innervate the prothoracic gland during the fifth instar are most active during days 0-4, after which they reduce and then peak again on day 6. Expression suppresses the biosynthesis of steroid hormones called ecdysteroids that elicit molting and metamorphosis. The protein is FMRFamide-related peptides of Bombyx mori (Silk moth).